The sequence spans 594 residues: Potassium-transporting ATPase potassium-binding subunit (594 aa).

10 helical membrane-spanning segments follow: residues 3–23 (ADFLGLLLLYLTILLCAAPLL), 67–87 (AVAMLVFNVLGVLAVYALQRL), 136–156 (ALTVQNFVSAATGIAVLIALV), 179–199 (LYVLLPLSFILALALVSQGVV), 287–307 (LEMLAILLIPAALCWTFGEMV), 314–334 (VAILAAMTVLFAGFAASAAYF), 415–435 (GLYGMLAFAILAVFIAGLMIG), 453–473 (VALVILATPALVLAGTAVAVL), 519–539 (VLLGLAMWFGRYTIIVAILAL), and 562–582 (LFVALLVGAVLLVGALTYVPA).

Belongs to the KdpA family. In terms of assembly, the system is composed of three essential subunits: KdpA, KdpB and KdpC.

Its subcellular location is the cell inner membrane. In terms of biological role, part of the high-affinity ATP-driven potassium transport (or Kdp) system, which catalyzes the hydrolysis of ATP coupled with the electrogenic transport of potassium into the cytoplasm. This subunit binds the periplasmic potassium ions and delivers the ions to the membrane domain of KdpB through an intramembrane tunnel. The polypeptide is Potassium-transporting ATPase potassium-binding subunit (Bordetella parapertussis (strain 12822 / ATCC BAA-587 / NCTC 13253)).